Here is a 328-residue protein sequence, read N- to C-terminus: Sterol-4-alpha-carboxylate 3-dehydrogenase, decarboxylating (328 aa).

The Proton acceptor role is filled by Tyr145. NAD(+) is bound at residue Lys149. A helical membrane pass occupies residues 259–279; the sequence is LHMVLPTPIALSLVWIMALIW.

This sequence belongs to the 3-beta-HSD family. Homodimer.

Its subcellular location is the endoplasmic reticulum membrane. The protein localises to the lipid droplet. The enzyme catalyses a 3beta-hydroxysteroid-4alpha-carboxylate + NADP(+) = a 3-oxosteroid + CO2 + NADPH. It catalyses the reaction a 3beta-hydroxysteroid-4alpha-carboxylate + NAD(+) = a 3-oxosteroid + CO2 + NADH. Its pathway is steroid biosynthesis; zymosterol biosynthesis; zymosterol from lanosterol: step 4/6. Functionally, catalyzes the NAD(P)(+)-dependent oxidative decarboxylation of the C4 methyl groups of 4-alpha-carboxysterols in post-squalene cholesterol biosynthesis. This is Sterol-4-alpha-carboxylate 3-dehydrogenase, decarboxylating (nsdhl) from Dictyostelium discoideum (Social amoeba).